A 298-amino-acid chain; its full sequence is UPF0282 protein Kcr_0286 (298 aa).

Belongs to the UPF0282 family.

This Korarchaeum cryptofilum (strain OPF8) protein is UPF0282 protein Kcr_0286.